The primary structure comprises 263 residues: 1-(5-phosphoribosyl)-5-[(5-phosphoribosylamino)methylideneamino] imidazole-4-carboxamide isomerase (263 aa).

Belongs to the HisA/HisF family.

Its subcellular location is the cytoplasm. It catalyses the reaction 1-(5-phospho-beta-D-ribosyl)-5-[(5-phospho-beta-D-ribosylamino)methylideneamino]imidazole-4-carboxamide = 5-[(5-phospho-1-deoxy-D-ribulos-1-ylimino)methylamino]-1-(5-phospho-beta-D-ribosyl)imidazole-4-carboxamide. It participates in amino-acid biosynthesis; L-histidine biosynthesis; L-histidine from 5-phospho-alpha-D-ribose 1-diphosphate: step 4/9. This Eremothecium gossypii (strain ATCC 10895 / CBS 109.51 / FGSC 9923 / NRRL Y-1056) (Yeast) protein is 1-(5-phosphoribosyl)-5-[(5-phosphoribosylamino)methylideneamino] imidazole-4-carboxamide isomerase (HIS6).